The sequence spans 555 residues: Connector enhancer of kinase suppressor of ras 3 (555 aa).

One can recognise an SAM domain in the interval 7-72; it reads WSPKQVVDWT…LEAVDLLCAL (66 aa). Residues 80-174 enclose the CRIC domain; sequence NMKNLVLKLR…TTVQKDCFVA (95 aa). Residues 211–293 form the PDZ domain; that stretch reads EVHLPNIKPG…GVVLLLKKRP (83 aa). Disordered regions lie at residues 309–334, 347–390, and 517–537; these read WKPPLVQTSPPPATTQSPESTMDTSL, PPPP…FLDQ, and IPFQEEGTKKKSGSSATKSSS. In terms of domain architecture, DUF1170 spans 325 to 546; that stretch reads SPESTMDTSL…STEPSLLVSW (222 aa). Ser381 and Ser383 each carry phosphoserine.

This sequence belongs to the CNKSR family. In terms of assembly, interacts with epithelial sodium channel ENaC. Interacts directly with SCNN1A (ENaC subunit alpha) and SCNN1B (ENaC subunit beta) C-terminal tails. Interacts with ENaC regulatory proteins NEDD4L, RAF1 and SGK1.

The protein localises to the cytoplasm. Its subcellular location is the apical cell membrane. Involved in transepithelial sodium transport. Regulates aldosterone-induced and epithelial sodium channel (ENaC)-mediated sodium transport through regulation of ENaC cell surface expression. Acts as a scaffold protein coordinating the assembly of an ENaC-regulatory complex (ERC). The protein is Connector enhancer of kinase suppressor of ras 3 (CNKSR3) of Homo sapiens (Human).